The primary structure comprises 360 residues: D-alanine--D-alanine ligase (360 aa).

The region spanning 149–353 is the ATP-grasp domain; it reads KKLMAAEGLP…YEELLDVLVQ (205 aa). ATP is bound at residue 176–231; that stretch reads KNLLGLPVFVKPARGGSSIGISRVTAWEDFNKAVGLARAHDEKVIVESEIVGSEVE. Mg(2+)-binding residues include D308, E320, and N322.

The protein belongs to the D-alanine--D-alanine ligase family. Mg(2+) serves as cofactor. Mn(2+) is required as a cofactor.

The protein localises to the cytoplasm. It catalyses the reaction 2 D-alanine + ATP = D-alanyl-D-alanine + ADP + phosphate + H(+). The protein operates within cell wall biogenesis; peptidoglycan biosynthesis. Cell wall formation. The chain is D-alanine--D-alanine ligase from Corynebacterium glutamicum (strain ATCC 13032 / DSM 20300 / JCM 1318 / BCRC 11384 / CCUG 27702 / LMG 3730 / NBRC 12168 / NCIMB 10025 / NRRL B-2784 / 534).